A 265-amino-acid chain; its full sequence is MRILMNKFVGAVQLIIDIGNTSISFALYRLDKMQIYCKLGTKRDLSFKELYKFLKVKFDYKVDQVFVSSVVPVIDTVLINAIVSLYKVNPLFIRFDLSYDLSFNLYNNNRFVLGSDVFANLVGAIEYYNINDALVVDLGTACTIFAISRREGILGGLINGGPFTDLNALIQNAYLLNDFNLAVPKKLLGLSTIDSVNSGVIYQYKYLIEGVYHELRHNYDKEFRLIITGGNSYLVLPLISVDFIANLYLTLEGIRILGNAFKGDY.

ATP is bound at residue 17 to 24 (DIGNTSIS). Residue 114–117 (GSDV) coordinates substrate. D116 acts as the Proton acceptor in catalysis. D137 provides a ligand contact to K(+). T140 lines the ATP pocket. Substrate is bound at residue T192.

The protein belongs to the type III pantothenate kinase family. As to quaternary structure, homodimer. NH4(+) serves as cofactor. K(+) is required as a cofactor.

The protein localises to the cytoplasm. It catalyses the reaction (R)-pantothenate + ATP = (R)-4'-phosphopantothenate + ADP + H(+). It participates in cofactor biosynthesis; coenzyme A biosynthesis; CoA from (R)-pantothenate: step 1/5. Functionally, catalyzes the phosphorylation of pantothenate (Pan), the first step in CoA biosynthesis. This Borrelia hermsii (strain HS1 / DAH) protein is Type III pantothenate kinase.